Here is a 145-residue protein sequence, read N- to C-terminus: UPF0201 protein Saci_1285 (145 aa).

This sequence belongs to the UPF0201 family.

In Sulfolobus acidocaldarius (strain ATCC 33909 / DSM 639 / JCM 8929 / NBRC 15157 / NCIMB 11770), this protein is UPF0201 protein Saci_1285.